The primary structure comprises 47 residues: Heat shock protein HSP 90 (47 aa).

The protein belongs to the heat shock protein 90 family. In terms of assembly, homodimer.

The protein localises to the cytoplasm. Its function is as follows. Putative molecular chaperone that may promote the maturation, structural maintenance and proper regulation of specific target proteins. The chain is Heat shock protein HSP 90 from Oryctolagus cuniculus (Rabbit).